The sequence spans 229 residues: Lytic polysaccharide monooxygenase-like protein ham-7 (229 aa).

The first 17 residues, 1–17 (MLTSTLLALASAALASA), serve as a signal peptide directing secretion. Histidine 18 is a Cu(2+) binding site. Disulfide bonds link cysteine 47/cysteine 157 and cysteine 122/cysteine 178. Asparagine 55, asparagine 98, asparagine 139, asparagine 174, and asparagine 180 each carry an N-linked (GlcNAc...) asparagine glycan. A lipid anchor (GPI-anchor amidated serine) is attached at serine 206. A propeptide spans 207–229 (AAASLARMAGWVPLVAGGLWLML) (removed in mature form).

It belongs to the X325 family. It depends on Cu(2+) as a cofactor.

The protein localises to the cell membrane. Lytic polysaccharide monooxygenase-like protein that has diverged to biological functions other than polysaccharide degradation since it does not perform oxidative cleavage of polysaccharides. Acts as the major cell wall sensor that regulates MAK-1-dependent hyphal anastomosis, the fusion of hyphal cells. May also act as a cell surface-bound protein that functions in the copper-accumulation pathway. The sequence is that of Lytic polysaccharide monooxygenase-like protein ham-7 from Neurospora crassa (strain ATCC 24698 / 74-OR23-1A / CBS 708.71 / DSM 1257 / FGSC 987).